The following is a 210-amino-acid chain: Mediator of RNA polymerase II transcription subunit 20 (210 aa).

It belongs to the Mediator complex subunit 20 family. Component of the Mediator complex, which is composed of at least 21 subunits that form three structurally distinct submodules. The Mediator head module contains MED6, MED8, MED11, SRB4/MED17, SRB5/MED18, ROX3/MED19, SRB2/MED20 and SRB6/MED22, the middle module contains MED1, MED4, NUT1/MED5, MED7, CSE2/MED9, NUT2/MED10, SRB7/MED21 and SOH1/MED31, and the tail module contains MED2, PGD1/MED3, RGR1/MED14, GAL11/MED15 and SIN4/MED16. The head and the middle modules interact directly with RNA polymerase II, whereas the elongated tail module interacts with gene-specific regulatory proteins. MED1 interacts directly with MED4 and MED7. SRB2/MED20 interacts directly with SRB4/MED17 and SRB5/MED18.

It localises to the nucleus. Functionally, component of the Mediator complex, a coactivator involved in the regulated transcription of nearly all RNA polymerase II-dependent genes. Mediator functions as a bridge to convey information from gene-specific regulatory proteins to the basal RNA polymerase II transcription machinery. The Mediator complex, having a compact conformation in its free form, is recruited to promoters by direct interactions with regulatory proteins and serves for the assembly of a functional preinitiation complex with RNA polymerase II and the general transcription factors. The Mediator complex unfolds to an extended conformation and partially surrounds RNA polymerase II, specifically interacting with the unphosphorylated form of the C-terminal domain (CTD) of RNA polymerase II. The Mediator complex dissociates from the RNA polymerase II holoenzyme and stays at the promoter when transcriptional elongation begins. This is Mediator of RNA polymerase II transcription subunit 20 (SRB2) from Saccharomyces cerevisiae (strain ATCC 204508 / S288c) (Baker's yeast).